Reading from the N-terminus, the 469-residue chain is Cytochrome c biogenesis protein CcsB (469 aa).

The next 3 helical transmembrane spans lie at 30 to 50, 89 to 109, and 175 to 195; these read LRLA…GTVI, TPWF…CSLT, and IGPI…IWGS.

It belongs to the Ccs1/CcsB family. May interact with CcsA.

Its subcellular location is the cellular thylakoid membrane. Required during biogenesis of c-type cytochromes (cytochrome c6 and cytochrome f) at the step of heme attachment. The sequence is that of Cytochrome c biogenesis protein CcsB from Synechococcus sp. (strain JA-2-3B'a(2-13)) (Cyanobacteria bacterium Yellowstone B-Prime).